The sequence spans 151 residues: Large-conductance mechanosensitive channel (151 aa).

Transmembrane regions (helical) follow at residues 12 to 32 (GNIV…ALVT) and 71 to 91 (VLLS…FLVV). The tract at residues 122-151 (AQTNGDSPGRHGGRGTPSPTDGPLASTESQ) is disordered.

Belongs to the MscL family. In terms of assembly, homopentamer.

It localises to the cell membrane. Channel that opens in response to stretch forces in the membrane lipid bilayer. May participate in the regulation of osmotic pressure changes within the cell. In Mycobacterium bovis (strain BCG / Pasteur 1173P2), this protein is Large-conductance mechanosensitive channel.